We begin with the raw amino-acid sequence, 832 residues long: Golgin subfamily A member 6-like protein 24 (832 aa).

5 disordered regions span residues 1–107, 303–333, 351–431, 508–652, and 664–832; these read MWPQ…QEAL, QEQEEKIREQEEKMRRQEEMMWEKEEKMRRQ, MHEQ…EMWR, QEEM…EQEE, and QEEM…MQEH. Residues 13–27 show a composition bias toward basic residues; that stretch reads LPTHPHLPTHPHLPT. The segment covering 37–58 has biased composition (basic and acidic residues); the sequence is MSKETRQSKLAEAKEQLTDHHP. 2 stretches are compositionally biased toward polar residues: residues 59-69 and 77-89; these read QTNPSVGTAAS and NNGTNPETTTSGG. The span at 92–107 shows a compositional bias: basic and acidic residues; that stretch reads SPEDEQKASHQHQEAL. A coiled-coil region spans residues 163-828; sequence LEQALSAVAT…EVRLRQQEEK (666 aa). Basic and acidic residues-rich tracts occupy residues 664-684 and 692-832; these read QEEMMQEQEEKMGEQEEKMWE and QEEK…MQEH.

This sequence belongs to the GOLGA6 family.

The chain is Golgin subfamily A member 6-like protein 24 from Homo sapiens (Human).